The sequence spans 114 residues: Cuticle protein CP1158 (114 aa).

Position 1 is a pyrrolidone carboxylic acid (Gln-1). 4 repeat units span residues 1–17, 26–43, 70–87, and 95–112.

In terms of tissue distribution, calcified shell.

The sequence is that of Cuticle protein CP1158 from Cancer pagurus (Rock crab).